Reading from the N-terminus, the 366-residue chain is Putative agmatine deiminase (366 aa).

C357 acts as the Amidino-cysteine intermediate in catalysis.

It belongs to the agmatine deiminase family.

The enzyme catalyses agmatine + H2O = N-carbamoylputrescine + NH4(+). The sequence is that of Putative agmatine deiminase from Lactococcus lactis subsp. lactis (strain IL1403) (Streptococcus lactis).